We begin with the raw amino-acid sequence, 215 residues long: Outer membrane protein assembly factor BamC homolog (215 aa).

The first 16 residues, 1–16 (MKKIILNLVTAIILAG), serve as a signal peptide directing secretion. Residue cysteine 17 is the site of N-palmitoyl cysteine attachment. The S-diacylglycerol cysteine moiety is linked to residue cysteine 17.

Belongs to the BamC family.

The protein resides in the cell outer membrane. This is Outer membrane protein assembly factor BamC homolog from Haemophilus influenzae (strain ATCC 51907 / DSM 11121 / KW20 / Rd).